The chain runs to 242 residues: Protein GrpE (242 aa).

Residues 1–10 show a composition bias toward polar residues; it reads MAGENSSTET. The disordered stretch occupies residues 1 to 64; it reads MAGENSSTET…QSTESTSKEK (64 aa). Residues 11–20 are compositionally biased toward basic and acidic residues; it reads KNQEINEKTP. 2 stretches are compositionally biased toward polar residues: residues 21 to 32 and 40 to 59; these read EVQTFETNVEFE and DTEL…STES.

Belongs to the GrpE family. Homodimer.

It localises to the cytoplasm. Functionally, participates actively in the response to hyperosmotic and heat shock by preventing the aggregation of stress-denatured proteins, in association with DnaK and GrpE. It is the nucleotide exchange factor for DnaK and may function as a thermosensor. Unfolded proteins bind initially to DnaJ; upon interaction with the DnaJ-bound protein, DnaK hydrolyzes its bound ATP, resulting in the formation of a stable complex. GrpE releases ADP from DnaK; ATP binding to DnaK triggers the release of the substrate protein, thus completing the reaction cycle. Several rounds of ATP-dependent interactions between DnaJ, DnaK and GrpE are required for fully efficient folding. This chain is Protein GrpE, found in Trichodesmium erythraeum (strain IMS101).